Here is an 86-residue protein sequence, read N- to C-terminus: Electron transfer flavoprotein regulatory factor 1 (86 aa).

It belongs to the complex I LYR family. As to quaternary structure, homotetramer. Interacts with NDUFAB1. Interacts with ETFA. Interacts with ETFB.

The protein resides in the mitochondrion. Functionally, acts as a regulator of the electron transfer flavoprotein by promoting the removal of flavin from the ETF holoenzyme (composed of ETFA and ETFB). This chain is Electron transfer flavoprotein regulatory factor 1, found in Mus musculus (Mouse).